A 304-amino-acid chain; its full sequence is Porphobilinogen deaminase (304 aa).

Position 240 is an S-(dipyrrolylmethanemethyl)cysteine (Cys-240).

Belongs to the HMBS family. As to quaternary structure, monomer. The cofactor is dipyrromethane.

It carries out the reaction 4 porphobilinogen + H2O = hydroxymethylbilane + 4 NH4(+). The protein operates within porphyrin-containing compound metabolism; protoporphyrin-IX biosynthesis; coproporphyrinogen-III from 5-aminolevulinate: step 2/4. Tetrapolymerization of the monopyrrole PBG into the hydroxymethylbilane pre-uroporphyrinogen in several discrete steps. In Xanthomonas oryzae pv. oryzae (strain MAFF 311018), this protein is Porphobilinogen deaminase.